The primary structure comprises 636 residues: Methyl-CpG-binding domain protein 1 (636 aa).

Residues 1–69 (MAESWQDCPA…TLFDFRQGTL (69 aa)) form the MBD domain. A disordered region spans residues 75–113 (KTHPLAVPSKKKKKPSKPAKTKKQQVGLQRSEVRIETPQ). Positions 83–97 (SKKKKKPSKPAKTKK) are enriched in basic residues. A Nuclear localization signal motif is present at residues 84–88 (KKKKK). K117 is covalently cross-linked (Glycyl lysine isopeptide (Lys-Gly) (interchain with G-Cter in SUMO2)). CXXC-type zinc fingers lie at residues 187–234 (RMFK…RRCL) and 235–281 (RIME…RRCF). Positions 194, 197, 200, 206, 209, 212, 228, 233, 243, 246, 249, 255, 258, 261, 275, and 280 each coordinate Zn(2+). Residues 291–314 (GSKVASQRHSQAPPLPPHPASQYT) are disordered. K293 is covalently cross-linked (Glycyl lysine isopeptide (Lys-Gly) (interchain with G-Cter in SUMO2)). The CXXC-type 3 zinc finger occupies 348 to 396 (TNQRQNRKCGACAACLRRMDCGRCDFCCDKPKFGGGNQKRQKCRWRQCL). Positions 356, 359, 362, 368, 371, 374, 390, and 395 each coordinate Zn(2+). The interval 407 to 474 (AGSGSGEGAG…GRGSVLPQPD (68 aa)) is disordered. The residue at position 409 (S409) is a Phosphoserine. Residues K443 and K461 each participate in a glycyl lysine isopeptide (Lys-Gly) (interchain with G-Cter in SUMO2) cross-link. Glycyl lysine isopeptide (Lys-Gly) (interchain with G-Cter in SUMO2); alternate cross-links involve residues K520 and K559. Positions 543 to 589 (QSGFPSKAADPDLSPVKQEPPGPEEDGEEKKDDVSETTPAEEIGGVG) are disordered. A transcriptional repression domain (TRD) region spans residues 550–612 (AADPDLSPVK…RLRDAEAWLP (63 aa)).

Interacts with OASL, ATF7IP, ATF7IP2 and BAHD1. Binds CHAF1A and the SUV39H1-CBX5 complex via the MBD domain. Binds MGP via the TRD domain. May be part of the MeCP1 complex. During DNA replication, it recruits SETDB1 to form a S phase-specific complex that facilitates methylation of H3 'Lys-9' during replication-coupled chromatin assembly and is at least composed of the CAF-1 subunit CHAF1A, MBD1 and SETDB1. In terms of assembly, interacts with the Ten-1 ICD form of TENM1. In terms of processing, sumoylated, sumoylation may increase interaction with ATF7IP. In terms of tissue distribution, highly expressed in kidney, liver and brain. Detected at lower levels in heart, lung, skeletal muscle, spleen and testis.

It localises to the nucleus. Its subcellular location is the nucleus matrix. The protein resides in the nucleus speckle. The protein localises to the chromosome. Functionally, transcriptional repressor that binds CpG islands in promoters where the DNA is methylated at position 5 of cytosine within CpG dinucleotides. Binding is abolished by the presence of 7-mG that is produced by DNA damage by methylmethanesulfonate (MMS). Acts as transcriptional repressor and plays a role in gene silencing by recruiting ATF7IP, which in turn recruits factors such as the histone methyltransferase SETDB1. Probably forms a complex with SETDB1 and ATF7IP that represses transcription and couples DNA methylation and histone 'Lys-9' trimethylation. Isoform 1 can also repress transcription from unmethylated promoters. The sequence is that of Methyl-CpG-binding domain protein 1 from Mus musculus (Mouse).